The following is a 314-amino-acid chain: Small ribosomal subunit protein RACK1 (314 aa).

Residue threonine 10 is modified to Phosphothreonine. The stretch at 13–44 (GHSGWVTSLSTAPENPDILLSGSRDKSIILWN) is one WD 1 repeat. The residue at position 39 (serine 39) is a Phosphoserine. The residue at position 52 (tyrosine 52) is a Phosphotyrosine. 6 WD repeats span residues 61–91 (GHSHFVSDCALSFDSHYALSASWDKTIRLWD), 103–133 (GHTSDVLSVSISPDNRQVVSGSRDKTIKIWN), 146–178 (GHSDWVSCVRFSPNPDNLTFVSAGWDKAVKVWD), 190–220 (GHTGYVSAVTISPDGSLCASGGRDGTLMLWD), 231–260 (EAKANINALVFSPNRYWLCAATGSSIRIFD), and 281–311 (SSEPECISLTWSPDGQTLFSGWTDNLIRVWQ). Serine 148 is subject to Phosphoserine. Phosphoserine occurs at positions 242 and 255.

Belongs to the WD repeat G protein beta family. Ribosomal protein RACK1 subfamily. Component of the small ribosomal subunit (SSU). Mature yeast ribosomes consist of a small (40S) and a large (60S) subunit. The 40S small subunit contains 1 molecule of ribosomal RNA (18S rRNA) and at least 33 different proteins. The large 60S subunit contains 3 rRNA molecules (25S, 5.8S and 5S rRNA) and at least 46 different proteins. RACK1 is located at the head of the SSU in the vicinity of the mRNA exit channel. RACK1 interacts with the mRNA-binding protein SCP16. RACK1 also exists simultaneously as a homodimer in a cytosolic non-ribosome-bound form. Interacts with pck2. Interacts with pat1/ran1.

It localises to the cytoplasm. Its subcellular location is the membrane. Component of the ribosome, a large ribonucleoprotein complex responsible for the synthesis of proteins in the cell. The small ribosomal subunit (SSU) binds messenger RNAs (mRNAs) and translates the encoded message by selecting cognate aminoacyl-transfer RNA (tRNA) molecules. The large subunit (LSU) contains the ribosomal catalytic site termed the peptidyl transferase center (PTC), which catalyzes the formation of peptide bonds, thereby polymerizing the amino acids delivered by tRNAs into a polypeptide chain. The nascent polypeptides leave the ribosome through a tunnel in the LSU and interact with protein factors that function in enzymatic processing, targeting, and the membrane insertion of nascent chains at the exit of the ribosomal tunnel. Located at the head of the 40S ribosomal subunit in the vicinity of the mRNA exit channel, RACK1 serves as a scaffold protein that can recruit other proteins to the ribosome. Involved in induction of the ribosome quality control (RQC) pathway; a pathway that degrades nascent peptide chains during problematic translation. Involved in the negative regulation of translation of a specific subset of proteins. May be a receptor for protein kinase C in the regulation of actin cytoskeleton organization during cell wall synthesis and morphogenesis. Involved in the control of G2/M transition. May function as an anchoring protein for pat1/ran1 kinase. Negatively regulates the cell integrity transduction pathway by favoring translation of the tyrosine-phosphatases pyp1 and pyp2 that deactivate pmk1. Positively regulates the synthesis of the stress-responsive transcription factor Atf1 and the cytoplasmic catalase, a detoxificant enzyme induced by treatment with hydrogen peroxide. This Schizosaccharomyces pombe (strain 972 / ATCC 24843) (Fission yeast) protein is Small ribosomal subunit protein RACK1.